The following is a 233-amino-acid chain: Octanoyltransferase (233 aa).

Positions 38 to 218 constitute a BPL/LPL catalytic domain; sequence AGGPDTLLLL…AVCDALDGVL (181 aa). Over residues 57-66 the composition is skewed to basic and acidic residues; that stretch reads RRTEPHERPL. The interval 57-77 is disordered; that stretch reads RRTEPHERPLDGTPVVDTDRG. Substrate is bound by residues 76–83, 148–150, and 161–163; these read RGGKITWH, AIG, and GFA. C179 functions as the Acyl-thioester intermediate in the catalytic mechanism.

Belongs to the LipB family.

The protein resides in the cytoplasm. It carries out the reaction octanoyl-[ACP] + L-lysyl-[protein] = N(6)-octanoyl-L-lysyl-[protein] + holo-[ACP] + H(+). It functions in the pathway protein modification; protein lipoylation via endogenous pathway; protein N(6)-(lipoyl)lysine from octanoyl-[acyl-carrier-protein]: step 1/2. Its function is as follows. Catalyzes the transfer of endogenously produced octanoic acid from octanoyl-acyl-carrier-protein onto the lipoyl domains of lipoate-dependent enzymes. Lipoyl-ACP can also act as a substrate although octanoyl-ACP is likely to be the physiological substrate. This is Octanoyltransferase from Mycolicibacterium paratuberculosis (strain ATCC BAA-968 / K-10) (Mycobacterium paratuberculosis).